The chain runs to 253 residues: Ubiquinone/menaquinone biosynthesis C-methyltransferase UbiE (253 aa).

S-adenosyl-L-methionine is bound by residues T76, D97, 125–126, and S142; that span reads NA.

It belongs to the class I-like SAM-binding methyltransferase superfamily. MenG/UbiE family.

It catalyses the reaction a 2-demethylmenaquinol + S-adenosyl-L-methionine = a menaquinol + S-adenosyl-L-homocysteine + H(+). The catalysed reaction is a 2-methoxy-6-(all-trans-polyprenyl)benzene-1,4-diol + S-adenosyl-L-methionine = a 5-methoxy-2-methyl-3-(all-trans-polyprenyl)benzene-1,4-diol + S-adenosyl-L-homocysteine + H(+). It functions in the pathway quinol/quinone metabolism; menaquinone biosynthesis; menaquinol from 1,4-dihydroxy-2-naphthoate: step 2/2. The protein operates within cofactor biosynthesis; ubiquinone biosynthesis. Methyltransferase required for the conversion of demethylmenaquinol (DMKH2) to menaquinol (MKH2) and the conversion of 2-polyprenyl-6-methoxy-1,4-benzoquinol (DDMQH2) to 2-polyprenyl-3-methyl-6-methoxy-1,4-benzoquinol (DMQH2). The protein is Ubiquinone/menaquinone biosynthesis C-methyltransferase UbiE of Xylella fastidiosa (strain 9a5c).